The primary structure comprises 144 residues: Large ribosomal subunit protein uL11 (144 aa).

This sequence belongs to the universal ribosomal protein uL11 family. As to quaternary structure, part of the ribosomal stalk of the 50S ribosomal subunit. Interacts with L10 and the large rRNA to form the base of the stalk. L10 forms an elongated spine to which L12 dimers bind in a sequential fashion forming a multimeric L10(L12)X complex. In terms of processing, one or more lysine residues are methylated.

Forms part of the ribosomal stalk which helps the ribosome interact with GTP-bound translation factors. The chain is Large ribosomal subunit protein uL11 from Neisseria meningitidis serogroup A / serotype 4A (strain DSM 15465 / Z2491).